Reading from the N-terminus, the 645-residue chain is 1,4-alpha-glucan branching enzyme GlgB (645 aa).

Catalysis depends on Asp309, which acts as the Nucleophile. Residue Glu352 is the Proton donor of the active site. The segment at Met621 to Arg645 is disordered. A compositionally biased stretch (basic and acidic residues) spans Lys626 to Leu635.

Belongs to the glycosyl hydrolase 13 family. GlgB subfamily. In terms of assembly, monomer.

The enzyme catalyses Transfers a segment of a (1-&gt;4)-alpha-D-glucan chain to a primary hydroxy group in a similar glucan chain.. It participates in glycan biosynthesis; glycogen biosynthesis. Catalyzes the formation of the alpha-1,6-glucosidic linkages in glycogen by scission of a 1,4-alpha-linked oligosaccharide from growing alpha-1,4-glucan chains and the subsequent attachment of the oligosaccharide to the alpha-1,6 position. In Bacillus cytotoxicus (strain DSM 22905 / CIP 110041 / 391-98 / NVH 391-98), this protein is 1,4-alpha-glucan branching enzyme GlgB.